The following is a 710-amino-acid chain: Polyribonucleotide nucleotidyltransferase (710 aa).

Residues aspartate 486 and aspartate 492 each coordinate Mg(2+). Residues 553-612 enclose the KH domain; it reads PRFETIKIHPDKIRDIIGKGGATIRSITEETNSSIDIDDDGTVKVYADDNEALQAALNRI. The S1 motif domain occupies 622 to 690; the sequence is GAIYEGTVVR…QRGRIKLSIK (69 aa).

The protein belongs to the polyribonucleotide nucleotidyltransferase family. As to quaternary structure, component of the RNA degradosome, which is a multiprotein complex involved in RNA processing and mRNA degradation. It depends on Mg(2+) as a cofactor.

Its subcellular location is the cytoplasm. The enzyme catalyses RNA(n+1) + phosphate = RNA(n) + a ribonucleoside 5'-diphosphate. In terms of biological role, involved in mRNA degradation. Catalyzes the phosphorolysis of single-stranded polyribonucleotides processively in the 3'- to 5'-direction. This is Polyribonucleotide nucleotidyltransferase from Cellvibrio japonicus (strain Ueda107) (Pseudomonas fluorescens subsp. cellulosa).